A 159-amino-acid chain; its full sequence is Phosphopantetheine adenylyltransferase (159 aa).

Residue T10 participates in substrate binding. ATP contacts are provided by residues T10–F11 and H18. Substrate contacts are provided by K42, M74, and R88. Residues G89–R91, E99, and W124–S130 contribute to the ATP site.

It belongs to the bacterial CoaD family. In terms of assembly, homohexamer. The cofactor is Mg(2+).

Its subcellular location is the cytoplasm. It carries out the reaction (R)-4'-phosphopantetheine + ATP + H(+) = 3'-dephospho-CoA + diphosphate. It participates in cofactor biosynthesis; coenzyme A biosynthesis; CoA from (R)-pantothenate: step 4/5. In terms of biological role, reversibly transfers an adenylyl group from ATP to 4'-phosphopantetheine, yielding dephospho-CoA (dPCoA) and pyrophosphate. This is Phosphopantetheine adenylyltransferase from Salmonella paratyphi A (strain ATCC 9150 / SARB42).